Consider the following 59-residue polypeptide: Gallinacin-14 (59 aa).

The first 18 residues, 1-18 (MGIFLLFLVLLAVPQAAP), serve as a signal peptide directing secretion. Cystine bridges form between C25–C54, C32–C47, and C37–C55.

It belongs to the beta-defensin family.

It is found in the secreted. The protein localises to the cytoplasmic granule. Has bactericidal activity. The polypeptide is Gallinacin-14 (GAL14) (Gallus gallus (Chicken)).